The following is a 581-amino-acid chain: MYRTHTCGELNIKDVGKKVVLSGWVDRIRDLGGIKFIILRDRYGVTQVVVNPESPAYEISQKIGREWVIQIEGTVSERPESTKTETQTGEIEVIVEKINVLSKAELPPFYPGDKVSEDLRLKYRYLDLRDKNMNKNLIIRHKMAQAAREFLNKHGFLEIETPYLTKSTPEGARDFLVPSRLQKGKFYALPQSPQLFKQLLMVSGFDKYYQFARCFRDEDLRADRQPEFTQIDIEMSFVEMEDVINLMENFVRYVYSSVGIKLPEKFDRITYDEAMEIYGSDKPDRRFGMELKDLTNYFKDTDFKIIKNVINNGGSIKGFITQIPISRKIASELESYVKEFGLGGLLWFKLENGEISSPTNKFLGGSYENISKDYNLKDGDVVLLAAHTNREQLNTALGALRLRIAKEHFKNLEEGFDALWVVDFPFLEWNEEEKRYVARHHPFTMPKNIDSKPEDIKAYAYDMILNGNEIGGGSIRIHNSEIQRKVFEIIGLTNKEAEEKFGFLLEALKYGAPPHGGIAFGFDRMVSIALRTSSIRDVIAFPKTTSGTCQLTGAPSSVDKSQLEELSIKLFDIKEGGDENE.

L-aspartate is bound at residue E170. The segment at 194–197 (QLFK) is aspartate. An L-aspartate-binding site is contributed by R216. ATP-binding positions include 216–218 (RDE) and Q225. H440 lines the L-aspartate pocket. E469 is an ATP binding site. Residue R476 participates in L-aspartate binding. 521-524 (GFDR) provides a ligand contact to ATP.

This sequence belongs to the class-II aminoacyl-tRNA synthetase family. Type 1 subfamily. In terms of assembly, homodimer.

It localises to the cytoplasm. It carries out the reaction tRNA(Asp) + L-aspartate + ATP = L-aspartyl-tRNA(Asp) + AMP + diphosphate. Functionally, catalyzes the attachment of L-aspartate to tRNA(Asp) in a two-step reaction: L-aspartate is first activated by ATP to form Asp-AMP and then transferred to the acceptor end of tRNA(Asp). This is Aspartate--tRNA ligase from Thermosipho africanus (strain TCF52B).